We begin with the raw amino-acid sequence, 200 residues long: Inner membrane protein E199L (200 aa).

N-linked (GlcNAc...) asparagine; by host glycosylation occurs at asparagine 131. Residues 150–170 (INVMNHPFLTLILIILILIII) form a helical membrane-spanning segment.

It belongs to the asfivirus E199L family. As to quaternary structure, interacts with host PYCR2; this interaction results in autophagy activation. Post-translationally, contains intramolecular disulfide bonds.

It is found in the virion membrane. Its subcellular location is the host membrane. Its function is as follows. Essential for viral fusion with host endosomal membrane and core release. Not required for virus morphogenesis and egress. Induces complete autophagy through the interaction with and down-regulation of host PYCR2. In Ornithodoros (relapsing fever ticks), this protein is Inner membrane protein E199L.